Reading from the N-terminus, the 189-residue chain is Interleukin-23 subunit alpha (189 aa).

The N-terminal stretch at 1–19 (MLGSRAVMLLLLLPWTAQG) is a signal peptide. C77 and C89 form a disulfide bridge.

It belongs to the IL-6 superfamily. Heterodimer with IL12B; disulfide-linked. The heterodimer is known as interleukin IL-23. Interacts with IL23R; this interaction enables recruitment of IL12RB1. In terms of tissue distribution, secreted by activated dendritic and phagocytic cells and keratinocytes. Also expressed by dermal Langerhans cells (at protein level).

It localises to the secreted. Its function is as follows. Associates with IL12B to form the pro-inflammatory cytokine IL-23 that plays different roles in innate and adaptive immunity. Released by antigen-presenting cells such as dendritic cells or macrophages, binds to a heterodimeric receptor complex composed of IL12RB1 and IL23R to activate JAK2 and TYK2 which then phosphorylate the receptor to form a docking site leading to the phosphorylation of STAT3 and STAT4. This process leads to activation of several pathways including p38 MAPK or NF-kappa-B and promotes the production of pro-inflammatory cytokines such as interleukin-17A/IL17A. In turn, participates in the early and effective intracellular bacterial clearance. Promotes the expansion and survival of T-helper 17 cells, a CD4-positive helper T-cell subset that produces IL-17, as well as other IL-17-producing cells. The chain is Interleukin-23 subunit alpha (IL23A) from Homo sapiens (Human).